The sequence spans 142 residues: Large ribosomal subunit protein uL11 (142 aa).

This sequence belongs to the universal ribosomal protein uL11 family. Part of the ribosomal stalk of the 50S ribosomal subunit. Interacts with L10 and the large rRNA to form the base of the stalk. L10 forms an elongated spine to which L12 dimers bind in a sequential fashion forming a multimeric L10(L12)X complex. Post-translationally, one or more lysine residues are methylated.

Functionally, forms part of the ribosomal stalk which helps the ribosome interact with GTP-bound translation factors. The protein is Large ribosomal subunit protein uL11 of Haemophilus influenzae (strain 86-028NP).